We begin with the raw amino-acid sequence, 376 residues long: Transcription factor Sp6 (376 aa).

Residues 1–70 form a disordered region; the sequence is MLTAVCGSLG…VDFSQGYELP (70 aa). Positions 118-126 match the 9aaTAD motif; it reads GSWWDLHPG. Residues 164–224 form a disordered region; that stretch reads PPPHPHPHHL…SRRSVPRSSG (61 aa). C2H2-type zinc fingers lie at residues 254–278, 284–308, and 314–336; these read HNCH…LRWH, FVCN…LQTH, and FPCA…MKTH. Residues 334–343 are compositionally biased toward basic and acidic residues; sequence KTHEGAKEEA. The interval 334–376 is disordered; the sequence is KTHEGAKEEAAAAAQGEGKAGGVVEPPGGKGKREAEGSSASSN. A compositionally biased stretch (low complexity) spans 344-360; sequence AAAAQGEGKAGGVVEPP.

The protein belongs to the Sp1 C2H2-type zinc-finger protein family. Ubiquitous. Preferentially expressed by proliferating epithelial cells of teeth, hair follicles and limbs.

The protein localises to the nucleus. Its function is as follows. Promotes cell proliferation. Plays a role in tooth germ growth. Plays a role in the control of enamel mineralization. Binds the AMBN promoter. In Mus musculus (Mouse), this protein is Transcription factor Sp6 (Sp6).